The primary structure comprises 477 residues: Ribulose bisphosphate carboxylase large chain (477 aa).

The propeptide occupies 1 to 2; that stretch reads MS. Proline 3 carries the post-translational modification N-acetylproline. N6,N6,N6-trimethyllysine is present on lysine 14. Substrate-binding residues include asparagine 123 and threonine 173. Residue lysine 175 is the Proton acceptor of the active site. Lysine 177 is a substrate binding site. Mg(2+)-binding residues include lysine 201, aspartate 203, and glutamate 204. The residue at position 201 (lysine 201) is an N6-carboxylysine. Residue histidine 294 is the Proton acceptor of the active site. Residues arginine 295, histidine 327, and serine 379 each coordinate substrate.

The protein belongs to the RuBisCO large chain family. Type I subfamily. As to quaternary structure, heterohexadecamer of 8 large chains and 8 small chains; disulfide-linked. The disulfide link is formed within the large subunit homodimers. It depends on Mg(2+) as a cofactor. In terms of processing, the disulfide bond which can form in the large chain dimeric partners within the hexadecamer appears to be associated with oxidative stress and protein turnover.

The protein resides in the plastid. Its subcellular location is the chloroplast. It catalyses the reaction 2 (2R)-3-phosphoglycerate + 2 H(+) = D-ribulose 1,5-bisphosphate + CO2 + H2O. It carries out the reaction D-ribulose 1,5-bisphosphate + O2 = 2-phosphoglycolate + (2R)-3-phosphoglycerate + 2 H(+). RuBisCO catalyzes two reactions: the carboxylation of D-ribulose 1,5-bisphosphate, the primary event in carbon dioxide fixation, as well as the oxidative fragmentation of the pentose substrate in the photorespiration process. Both reactions occur simultaneously and in competition at the same active site. This is Ribulose bisphosphate carboxylase large chain from Hyophorbe lagenicaulis (Bottle palm).